Consider the following 65-residue polypeptide: Large ribosomal subunit protein bL33 (65 aa).

The tract at residues valine 20–arginine 40 is disordered.

This sequence belongs to the bacterial ribosomal protein bL33 family.

The protein is Large ribosomal subunit protein bL33 of Prochlorococcus marinus (strain MIT 9211).